A 145-amino-acid chain; its full sequence is Flagellar assembly factor FliW (145 aa).

This sequence belongs to the FliW family. As to quaternary structure, interacts with translational regulator CsrA and flagellin(s).

The protein localises to the cytoplasm. Its function is as follows. Acts as an anti-CsrA protein, binds CsrA and prevents it from repressing translation of its target genes, one of which is flagellin. Binds to flagellin and participates in the assembly of the flagellum. This Exiguobacterium sp. (strain ATCC BAA-1283 / AT1b) protein is Flagellar assembly factor FliW.